Consider the following 218-residue polypeptide: Cell division protein SepF (218 aa).

Positions 25–115 (DVAASTDNVI…IANRREQYQQ (91 aa)) are disordered. The span at 29–43 (STDNVIPRSQQSVRA) shows a compositional bias: polar residues. Residues 47-63 (PKQEPRNNHVQQDHQAR) are compositionally biased toward basic and acidic residues. Polar residues predominate over residues 102–115 (STSSIANRREQYQQ).

This sequence belongs to the SepF family. Homodimer. Interacts with FtsZ.

Its subcellular location is the cytoplasm. Functionally, cell division protein that is part of the divisome complex and is recruited early to the Z-ring. Probably stimulates Z-ring formation, perhaps through the cross-linking of FtsZ protofilaments. Its function overlaps with FtsA. This is Cell division protein SepF from Streptococcus pyogenes serotype M5 (strain Manfredo).